We begin with the raw amino-acid sequence, 309 residues long: Homoserine O-succinyltransferase (309 aa).

Catalysis depends on Cys142, which acts as the Acyl-thioester intermediate. Substrate contacts are provided by Lys163 and Ser192. The active-site Proton acceptor is His235. Glu237 is an active-site residue. Arg249 contacts substrate.

Belongs to the MetA family. In terms of assembly, homodimer.

It localises to the cytoplasm. The catalysed reaction is L-homoserine + succinyl-CoA = O-succinyl-L-homoserine + CoA. Its pathway is amino-acid biosynthesis; L-methionine biosynthesis via de novo pathway; O-succinyl-L-homoserine from L-homoserine: step 1/1. Functionally, transfers a succinyl group from succinyl-CoA to L-homoserine, forming succinyl-L-homoserine. This is Homoserine O-succinyltransferase from Escherichia coli O157:H7.